An 87-amino-acid chain; its full sequence is Neurotoxin Cex4 (87 aa).

A signal peptide spans 1–19 (MNSLLMITACLFLIGTVWA). Residues 20–85 (KEGYLVNKST…TYPLPNKSCG (66 aa)) form the LCN-type CS-alpha/beta domain. Cystine bridges form between Cys31–Cys84, Cys35–Cys60, Cys44–Cys65, and Cys48–Cys67. Residue Cys84 is modified to Cysteine amide. A propeptide spanning residues 85 to 87 (GRK) is cleaved from the precursor.

This sequence belongs to the long (4 C-C) scorpion toxin superfamily. Sodium channel inhibitor family. Beta subfamily. In terms of tissue distribution, expressed by the venom gland.

The protein resides in the secreted. Its function is as follows. Beta toxins bind voltage-independently at site-4 of sodium channels (Nav) and shift the voltage of activation toward more negative potentials thereby affecting sodium channel activation and promoting spontaneous and repetitive firing. In Centruroides exilicauda (Bark scorpion), this protein is Neurotoxin Cex4.